Reading from the N-terminus, the 285-residue chain is UDP-3-O-acyl-N-acetylglucosamine deacetylase (285 aa).

3 residues coordinate Zn(2+): histidine 89, histidine 243, and aspartate 247. Histidine 270 functions as the Proton donor in the catalytic mechanism.

This sequence belongs to the LpxC family. Requires Zn(2+) as cofactor.

The enzyme catalyses a UDP-3-O-[(3R)-3-hydroxyacyl]-N-acetyl-alpha-D-glucosamine + H2O = a UDP-3-O-[(3R)-3-hydroxyacyl]-alpha-D-glucosamine + acetate. It functions in the pathway glycolipid biosynthesis; lipid IV(A) biosynthesis; lipid IV(A) from (3R)-3-hydroxytetradecanoyl-[acyl-carrier-protein] and UDP-N-acetyl-alpha-D-glucosamine: step 2/6. In terms of biological role, catalyzes the hydrolysis of UDP-3-O-myristoyl-N-acetylglucosamine to form UDP-3-O-myristoylglucosamine and acetate, the committed step in lipid A biosynthesis. The polypeptide is UDP-3-O-acyl-N-acetylglucosamine deacetylase (Thermosynechococcus vestitus (strain NIES-2133 / IAM M-273 / BP-1)).